A 315-amino-acid chain; its full sequence is 4-hydroxy-3-methylbut-2-enyl diphosphate reductase (315 aa).

Position 12 (cysteine 12) interacts with [4Fe-4S] cluster. Residues histidine 41 and histidine 74 each contribute to the (2E)-4-hydroxy-3-methylbut-2-enyl diphosphate site. Histidine 41 and histidine 74 together coordinate dimethylallyl diphosphate. Histidine 41 and histidine 74 together coordinate isopentenyl diphosphate. Cysteine 96 lines the [4Fe-4S] cluster pocket. A (2E)-4-hydroxy-3-methylbut-2-enyl diphosphate-binding site is contributed by histidine 124. Dimethylallyl diphosphate is bound at residue histidine 124. Histidine 124 is a binding site for isopentenyl diphosphate. The active-site Proton donor is glutamate 126. Threonine 168 contacts (2E)-4-hydroxy-3-methylbut-2-enyl diphosphate. Position 198 (cysteine 198) interacts with [4Fe-4S] cluster. Residues serine 226, serine 227, asparagine 228, and serine 270 each coordinate (2E)-4-hydroxy-3-methylbut-2-enyl diphosphate. Dimethylallyl diphosphate contacts are provided by serine 226, serine 227, asparagine 228, and serine 270. Isopentenyl diphosphate is bound by residues serine 226, serine 227, asparagine 228, and serine 270.

The protein belongs to the IspH family. The cofactor is [4Fe-4S] cluster.

The enzyme catalyses isopentenyl diphosphate + 2 oxidized [2Fe-2S]-[ferredoxin] + H2O = (2E)-4-hydroxy-3-methylbut-2-enyl diphosphate + 2 reduced [2Fe-2S]-[ferredoxin] + 2 H(+). It catalyses the reaction dimethylallyl diphosphate + 2 oxidized [2Fe-2S]-[ferredoxin] + H2O = (2E)-4-hydroxy-3-methylbut-2-enyl diphosphate + 2 reduced [2Fe-2S]-[ferredoxin] + 2 H(+). The protein operates within isoprenoid biosynthesis; dimethylallyl diphosphate biosynthesis; dimethylallyl diphosphate from (2E)-4-hydroxy-3-methylbutenyl diphosphate: step 1/1. It participates in isoprenoid biosynthesis; isopentenyl diphosphate biosynthesis via DXP pathway; isopentenyl diphosphate from 1-deoxy-D-xylulose 5-phosphate: step 6/6. Its function is as follows. Catalyzes the conversion of 1-hydroxy-2-methyl-2-(E)-butenyl 4-diphosphate (HMBPP) into a mixture of isopentenyl diphosphate (IPP) and dimethylallyl diphosphate (DMAPP). Acts in the terminal step of the DOXP/MEP pathway for isoprenoid precursor biosynthesis. This is 4-hydroxy-3-methylbut-2-enyl diphosphate reductase from Pseudomonas syringae pv. tomato (strain ATCC BAA-871 / DC3000).